The chain runs to 284 residues: Nucleotide-binding protein Shewmr4_0670 (284 aa).

8-15 (GRSGSGKS) is a binding site for ATP. 56–59 (DVRN) contributes to the GTP binding site.

This sequence belongs to the RapZ-like family.

Displays ATPase and GTPase activities. The chain is Nucleotide-binding protein Shewmr4_0670 from Shewanella sp. (strain MR-4).